Reading from the N-terminus, the 257-residue chain is Indole-3-glycerol phosphate synthase (257 aa).

It belongs to the TrpC family.

The enzyme catalyses 1-(2-carboxyphenylamino)-1-deoxy-D-ribulose 5-phosphate + H(+) = (1S,2R)-1-C-(indol-3-yl)glycerol 3-phosphate + CO2 + H2O. It participates in amino-acid biosynthesis; L-tryptophan biosynthesis; L-tryptophan from chorismate: step 4/5. The sequence is that of Indole-3-glycerol phosphate synthase from Phenylobacterium zucineum (strain HLK1).